Reading from the N-terminus, the 486-residue chain is E3 ubiquitin-protein ligase RNF8 (486 aa).

Residues 38-92 (VTVGRGFGVTYQLVSKICPLMISRNHCVLKQNPEGQWTIMDNKSLNGVWLNRARL) form the FHA domain. Positions 68–72 (QNPEG) are required for interaction with PIWIL1. Position 157 is a phosphoserine (Ser157). The segment covering 180-201 (SCESGQSVKSQGKGEVSSTPSE) has biased composition (polar residues). Positions 180 to 207 (SCESGQSVKSQGKGEVSSTPSENLDPKL) are disordered. Residues 404 to 442 (CIICSEYFIEAVTLNCAHSFCSYCINEWMKRKIECPICR) form an RING-type zinc finger.

The protein belongs to the RNF8 family. As to quaternary structure, homodimer. Forms a E2-E3 ubiquitin ligase complex composed of the RNF8 homodimer and a E2 heterodimer of UBE2N and UBE2V2. Interacts with class III E2s, including UBE2E1, UBE2E2, and UBE2E3 and with UBE2N. Interacts with RXRA. Interacts (via FHA domain) with phosphorylated HERC2 (via C-terminus). Interacts with PIWIL1; leading to sequester RNF8 in the cytoplasm. Interacts with WRAP53/TCAB1. Post-translationally, autoubiquitinated through 'Lys-48' and 'Lys-63' of ubiquitin. 'Lys-63' polyubiquitination is mediated by UBE2N. 'Lys-29'-type polyubiquitination is also observed, but it doesn't require its own functional RING-type zinc finger.

It localises to the nucleus. It is found in the cytoplasm. The protein resides in the midbody. The protein localises to the chromosome. Its subcellular location is the telomere. The enzyme catalyses S-ubiquitinyl-[E2 ubiquitin-conjugating enzyme]-L-cysteine + [acceptor protein]-L-lysine = [E2 ubiquitin-conjugating enzyme]-L-cysteine + N(6)-ubiquitinyl-[acceptor protein]-L-lysine.. Its pathway is protein modification; protein ubiquitination. E3 ubiquitin-protein ligase that plays a key role in DNA damage signaling via 2 distinct roles: by mediating the 'Lys-63'-linked ubiquitination of histones H2A and H2AX and promoting the recruitment of DNA repair proteins at double-strand breaks (DSBs) sites, and by catalyzing 'Lys-48'-linked ubiquitination to remove target proteins from DNA damage sites. Following DNA DSBs, it is recruited to the sites of damage by ATM-phosphorylated MDC1 and catalyzes the 'Lys-63'-linked ubiquitination of histones H2A and H2AX, thereby promoting the formation of TP53BP1 and BRCA1 ionizing radiation-induced foci (IRIF). Also controls the recruitment of UIMC1-BRCC3 (RAP80-BRCC36) and PAXIP1/PTIP to DNA damage sites. Promotes the recruitment of NBN to DNA damage sites by catalyzing 'Lys-6'-linked ubiquitination of NBN. Also recruited at DNA interstrand cross-links (ICLs) sites and catalyzes 'Lys-63'-linked ubiquitination of histones H2A and H2AX, leading to recruitment of FAAP20 and Fanconi anemia (FA) complex, followed by interstrand cross-link repair. H2A ubiquitination also mediates the ATM-dependent transcriptional silencing at regions flanking DSBs in cis, a mechanism to avoid collision between transcription and repair intermediates. Promotes the formation of 'Lys-63'-linked polyubiquitin chains via interactions with the specific ubiquitin-conjugating UBE2N/UBC13 and ubiquitinates non-histone substrates such as PCNA. Substrates that are polyubiquitinated at 'Lys-63' are usually not targeted for degradation. Also catalyzes the formation of 'Lys-48'-linked polyubiquitin chains via interaction with the ubiquitin-conjugating UBE2L6/UBCH8, leading to degradation of substrate proteins such as CHEK2, JMJD2A/KDM4A and KU80/XRCC5: it is still unclear how the preference toward 'Lys-48'- versus 'Lys-63'-linked ubiquitination is regulated but it could be due to RNF8 ability to interact with specific E2 specific ligases. For instance, interaction with phosphorylated HERC2 promotes the association between RNF8 and UBE2N/UBC13 and favors the specific formation of 'Lys-63'-linked ubiquitin chains. Promotes non-homologous end joining (NHEJ) by promoting the 'Lys-48'-linked ubiquitination and degradation the of KU80/XRCC5. Following DNA damage, mediates the ubiquitination and degradation of JMJD2A/KDM4A in collaboration with RNF168, leading to unmask H4K20me2 mark and promote the recruitment of TP53BP1 at DNA damage sites. Following DNA damage, mediates the ubiquitination and degradation of POLD4/p12, a subunit of DNA polymerase delta. In the absence of POLD4, DNA polymerase delta complex exhibits higher proofreading activity. In addition to its function in damage signaling, also plays a role in higher-order chromatin structure by mediating extensive chromatin decondensation. Involved in the activation of ATM by promoting histone H2B ubiquitination, which indirectly triggers histone H4 'Lys-16' acetylation (H4K16ac), establishing a chromatin environment that promotes efficient activation of ATM kinase. Required in the testis, where it plays a role in the replacement of histones during spermatogenesis. At uncapped telomeres, promotes the joining of deprotected chromosome ends by inducing H2A ubiquitination and TP53BP1 recruitment, suggesting that it may enhance cancer development by aggravating telomere-induced genome instability in case of telomeric crisis. Promotes the assembly of RAD51 at DNA DSBs in the absence of BRCA1 and TP53BP1 Also involved in class switch recombination in immune system, via its role in regulation of DSBs repair. May be required for proper exit from mitosis after spindle checkpoint activation and may regulate cytokinesis. May play a role in the regulation of RXRA-mediated transcriptional activity. Not involved in RXRA ubiquitination by UBE2E2. This Pongo abelii (Sumatran orangutan) protein is E3 ubiquitin-protein ligase RNF8.